We begin with the raw amino-acid sequence, 249 residues long: tRNA pseudouridine synthase A (249 aa).

Asp-53 (nucleophile) is an active-site residue. Position 111 (Tyr-111) interacts with substrate.

The protein belongs to the tRNA pseudouridine synthase TruA family. As to quaternary structure, homodimer.

It catalyses the reaction uridine(38/39/40) in tRNA = pseudouridine(38/39/40) in tRNA. Its function is as follows. Formation of pseudouridine at positions 38, 39 and 40 in the anticodon stem and loop of transfer RNAs. The chain is tRNA pseudouridine synthase A from Streptococcus suis (strain 05ZYH33).